Here is a 209-residue protein sequence, read N- to C-terminus: Small ribosomal subunit protein uS4 (209 aa).

Zn(2+) is bound by residues C9, C12, C26, and C31. The C4-type zinc finger occupies 9–31 (CRLCRREGVKLYLKGERCYSPKC). In terms of domain architecture, S4 RNA-binding spans 100–162 (RLDNVVYRLG…RNLELIRQNL (63 aa)).

It belongs to the universal ribosomal protein uS4 family. As to quaternary structure, part of the 30S ribosomal subunit. Contacts protein S5. The interaction surface between S4 and S5 is involved in control of translational fidelity. Zn(2+) serves as cofactor.

In terms of biological role, one of the primary rRNA binding proteins, it binds directly to 16S rRNA where it helps nucleate assembly of the body and platform of the 30S subunit. The protein is Small ribosomal subunit protein uS4 (rpsD) of Thermus thermophilus (strain ATCC BAA-163 / DSM 7039 / HB27).